Reading from the N-terminus, the 5148-residue chain is E3 ubiquitin-protein ligase RNF213 (5148 aa).

The span at 38–48 (DNTLVVSSTPE) shows a compositional bias: polar residues. The disordered stretch occupies residues 38–341 (DNTLVVSSTP…QAAAPEPTSA (304 aa)). Positions 69 to 78 (PGKELEKPEE) are enriched in basic and acidic residues. Over residues 101 to 113 (GTISSSEAPSSGL) the composition is skewed to polar residues. The segment covering 130-146 (PQNQAQQGGAASQPGHP) has biased composition (low complexity). Phosphoserine is present on Ser196. Basic and acidic residues-rich tracts occupy residues 233-245 (SKGE…KKVP), 257-267 (AGKETGEDVRK), and 279-289 (KHGDQEAELKG). Low complexity predominate over residues 319–335 (AAAVKTQQAAAPQQAAA). Lys1128 is covalently cross-linked (Glycyl lysine isopeptide (Lys-Gly) (interchain with G-Cter in SUMO2)). Residues 1957-1962 (GVGKSL), Glu2060, Ala2114, Asp2116, and Arg2177 each bind ATP. At Ser2234 the chain carries Phosphoserine. ATP is bound by residues Lys2460 and Ser2535. The stretch at 3435–3465 (EEMEIETSQSKELAEEQMEVEDSEEMKKASD) forms a coiled coil. 10 residues coordinate Zn(2+): Cys3947, Cys3950, Cys3962, His3964, Cys3967, Cys3970, Cys3982, Cys3985, Cys4451, and His4455. Residues 3947–3986 (CFICHGDAQDPVCLPCDHVYCLRCIQTWLIPGQMMCPYCL) form an RING-type zinc finger. An RZ-type zinc finger spans residues 4429–4501 (MPEDLLVHAR…IRNNEDRTQT (73 aa)). Residue Cys4462 is the Nucleophile; for E3 ubiquitin-lipopolysaccharide ligase activity of the active site. Zn(2+)-binding residues include Cys4471 and Cys4474.

The protein belongs to the AAA ATPase family. As to quaternary structure, monomer. Interacts with UBE2L3/UBCH7; UBE2L3/UBCH7 is the most efficient ubiquitin-conjugating enzyme E2 for the ubiquitin ligase activity. Interacts with UBE2N/UBC13; promoting 'Lys-63'-linked ubiquitination of target proteins.

The protein resides in the cytoplasm. Its subcellular location is the cytosol. The protein localises to the lipid droplet. It catalyses the reaction S-ubiquitinyl-[E2 ubiquitin-conjugating enzyme]-L-cysteine + [acceptor protein]-L-lysine = [E2 ubiquitin-conjugating enzyme]-L-cysteine + N(6)-ubiquitinyl-[acceptor protein]-L-lysine.. The catalysed reaction is ATP + H2O = ADP + phosphate + H(+). It functions in the pathway protein modification; protein ubiquitination. Atypical E3 ubiquitin ligase that can catalyze ubiquitination of both proteins and lipids, and which is involved in various processes, such as lipid metabolism, angiogenesis and cell-autonomous immunity. Acts as a key immune sensor by catalyzing ubiquitination of the lipid A moiety of bacterial lipopolysaccharide (LPS) via its RZ-type zinc-finger: restricts the proliferation of cytosolic bacteria, such as Salmonella, by generating the bacterial ubiquitin coat through the ubiquitination of LPS. Also acts indirectly by mediating the recruitment of the LUBAC complex, which conjugates linear polyubiquitin chains. Ubiquitination of LPS triggers cell-autonomous immunity, such as antibacterial autophagy, leading to degradation of the microbial invader. Involved in lipid metabolism by regulating fat storage and lipid droplet formation; act by inhibiting the lipolytic process. Also regulates lipotoxicity by inhibiting desaturation of fatty acids. Also acts as an E3 ubiquitin-protein ligase via its RING-type zinc finger: mediates 'Lys-63'-linked ubiquitination of target proteins. Involved in the non-canonical Wnt signaling pathway in vascular development: acts by mediating ubiquitination and degradation of FLNA and NFATC2 downstream of RSPO3, leading to inhibit the non-canonical Wnt signaling pathway and promoting vessel regression. Also has ATPase activity; ATPase activity is required for ubiquitination of LPS. This Mus musculus (Mouse) protein is E3 ubiquitin-protein ligase RNF213.